A 289-amino-acid polypeptide reads, in one-letter code: Probable branched-chain-amino-acid aminotransferase (289 aa).

At K154 the chain carries N6-(pyridoxal phosphate)lysine.

Belongs to the class-IV pyridoxal-phosphate-dependent aminotransferase family. Pyridoxal 5'-phosphate is required as a cofactor.

The catalysed reaction is L-leucine + 2-oxoglutarate = 4-methyl-2-oxopentanoate + L-glutamate. It carries out the reaction L-isoleucine + 2-oxoglutarate = (S)-3-methyl-2-oxopentanoate + L-glutamate. The enzyme catalyses L-valine + 2-oxoglutarate = 3-methyl-2-oxobutanoate + L-glutamate. It functions in the pathway amino-acid biosynthesis; L-isoleucine biosynthesis; L-isoleucine from 2-oxobutanoate: step 4/4. The protein operates within amino-acid biosynthesis; L-leucine biosynthesis; L-leucine from 3-methyl-2-oxobutanoate: step 4/4. Its pathway is amino-acid biosynthesis; L-valine biosynthesis; L-valine from pyruvate: step 4/4. Acts on leucine, isoleucine and valine. The polypeptide is Probable branched-chain-amino-acid aminotransferase (ilvE) (Rickettsia bellii (strain RML369-C)).